The chain runs to 144 residues: Mannitol-specific phosphotransferase enzyme IIA component (144 aa).

One can recognise a PTS EIIA type-2 domain in the interval 3–142; sequence ELFSNDNIFL…EEIKQVFEEA (140 aa). The Tele-phosphohistidine intermediate role is filled by H63. H63 carries the post-translational modification Phosphohistidine; by HPr.

As to quaternary structure, homodimer or homotrimer. Seems to be a monomer when not phosphorylated.

Its subcellular location is the cytoplasm. In terms of biological role, the phosphoenolpyruvate-dependent sugar phosphotransferase system (sugar PTS), a major carbohydrate active transport system, catalyzes the phosphorylation of incoming sugar substrates concomitantly with their translocation across the cell membrane. The enzyme II CmtAB PTS system is involved in D-mannitol transport. In Staphylococcus aureus (strain COL), this protein is Mannitol-specific phosphotransferase enzyme IIA component (mtlF).